Consider the following 220-residue polypeptide: Putative GED domain-containing protein DNM1P46 (220 aa).

The disordered stretch occupies residues 18–46; sequence VSVETRNVKPQGKDSKAEENGSHSFMHSM. Basic and acidic residues predominate over residues 28-38; it reads QGKDSKAEENG. The GED domain occupies 54–149; sequence METTQNLVDS…CCPTCTRLGT (96 aa). A disordered region spans residues 173–194; that stretch reads DTPGGVGRAGTAARRDSRGNEK. A compositionally biased stretch (basic and acidic residues) spans 185 to 194; the sequence is ARRDSRGNEK.

This chain is Putative GED domain-containing protein DNM1P46 (DNM1P46), found in Homo sapiens (Human).